A 238-amino-acid polypeptide reads, in one-letter code: DNA damage-regulated autophagy modulator protein 1 (238 aa).

6 helical membrane-spanning segments follow: residues 9 to 29 (AFVP…SYVV), 53 to 73 (SGIF…TMYT), 91 to 111 (VFNL…GIVA), 116 to 136 (LAVP…GVVY), 161 to 181 (MVIS…ASLI), and 200 to 220 (VSAI…LTFI).

Belongs to the DRAM/TMEM150 family.

Its subcellular location is the lysosome membrane. Its function is as follows. Lysosomal modulator of autophagy that plays a central role in p53/TP53-mediated apoptosis. Not involved in p73/TP73-mediated autophagy. The polypeptide is DNA damage-regulated autophagy modulator protein 1 (DRAM1) (Homo sapiens (Human)).